Consider the following 209-residue polypeptide: Peptide deformylase 2 (209 aa).

Fe cation-binding residues include Cys101 and His149. Residue Glu150 is part of the active site. Position 153 (His153) interacts with Fe cation.

Belongs to the polypeptide deformylase family. It depends on Fe(2+) as a cofactor.

It catalyses the reaction N-terminal N-formyl-L-methionyl-[peptide] + H2O = N-terminal L-methionyl-[peptide] + formate. Functionally, removes the formyl group from the N-terminal Met of newly synthesized proteins. Requires at least a dipeptide for an efficient rate of reaction. N-terminal L-methionine is a prerequisite for activity but the enzyme has broad specificity at other positions. This is Peptide deformylase 2 from Coxiella burnetii (strain RSA 493 / Nine Mile phase I).